A 207-amino-acid chain; its full sequence is BTB/POZ domain-containing protein At1g01640 (207 aa).

The region spanning 24-94 (TDVLVKPGEE…LYSGNLKAPY (71 aa)) is the BTB domain.

As to quaternary structure, interacts with CUL3A.

It participates in protein modification; protein ubiquitination. Functionally, may act as a substrate-specific adapter of an E3 ubiquitin-protein ligase complex (CUL3-RBX1-BTB) which mediates the ubiquitination and subsequent proteasomal degradation of target proteins. The polypeptide is BTB/POZ domain-containing protein At1g01640 (Arabidopsis thaliana (Mouse-ear cress)).